Reading from the N-terminus, the 169-residue chain is Ureidoglycolate lyase (169 aa).

The protein belongs to the ureidoglycolate lyase family. In terms of assembly, homodimer. Requires Ni(2+) as cofactor.

The enzyme catalyses (S)-ureidoglycolate = urea + glyoxylate. It participates in nitrogen metabolism; (S)-allantoin degradation. Its function is as follows. Catalyzes the catabolism of the allantoin degradation intermediate (S)-ureidoglycolate, generating urea and glyoxylate. Involved in the utilization of allantoin as nitrogen source. The sequence is that of Ureidoglycolate lyase from Brucella ovis (strain ATCC 25840 / 63/290 / NCTC 10512).